An 834-amino-acid chain; its full sequence is Meiotic sister-chromatid recombination protein 3 (834 aa).

4 disordered regions span residues 75–136 (PAAA…QPRT), 251–291 (EETE…TGSL), 343–378 (RKLA…KQPL), and 458–479 (VRRS…KKLT). The segment covering 343–368 (RKLAQPQQGQNQRRTVSFTQGSIDHM) has biased composition (polar residues).

It localises to the cell membrane. Its function is as follows. May be involved in the control of meiotic sister-chromatid recombination. This Candida glabrata (strain ATCC 2001 / BCRC 20586 / JCM 3761 / NBRC 0622 / NRRL Y-65 / CBS 138) (Yeast) protein is Meiotic sister-chromatid recombination protein 3 (MSC3).